The chain runs to 266 residues: Potassium/proton antiporter CemA (266 aa).

A run of 3 helical transmembrane segments spans residues Val-46 to Leu-66, Phe-151 to Leu-171, and Phe-226 to Ile-246.

Belongs to the CemA family.

It is found in the plastid. It localises to the chloroplast inner membrane. The catalysed reaction is K(+)(in) + H(+)(out) = K(+)(out) + H(+)(in). Functionally, contributes to K(+)/H(+) antiport activity by supporting proton efflux to control proton extrusion and homeostasis in chloroplasts in a light-dependent manner to modulate photosynthesis. Prevents excessive induction of non-photochemical quenching (NPQ) under continuous-light conditions. Indirectly promotes efficient inorganic carbon uptake into chloroplasts. The sequence is that of Potassium/proton antiporter CemA from Chlorella vulgaris (Green alga).